Reading from the N-terminus, the 138-residue chain is Putative pre-16S rRNA nuclease (138 aa).

The protein belongs to the YqgF nuclease family.

The protein localises to the cytoplasm. Could be a nuclease involved in processing of the 5'-end of pre-16S rRNA. The polypeptide is Putative pre-16S rRNA nuclease (Shigella dysenteriae serotype 1 (strain Sd197)).